Consider the following 287-residue polypeptide: Xyloglucan endotransglucosylase protein 1 (287 aa).

Residues 1-28 form the signal peptide; it reads MAFMSFINGFSTLFLVALLASSMMAAKG. The 191-residue stretch at 29 to 219 folds into the GH16 domain; it reads GNFYQDFDVT…WTKAPFTAYY (191 aa). Residue Glu-105 is the Nucleophile of the active site. Glu-109 acts as the Proton donor in catalysis. Glu-109 provides a ligand contact to xyloglucan. N-linked (GlcNAc...) asparagine glycosylation is present at Asn-113. Residues 122–124, 132–134, 198–199, and Gly-203 contribute to the xyloglucan site; these read HTN, NRE, and DW. 2 cysteine pairs are disulfide-bonded: Cys-227/Cys-231 and Cys-266/Cys-280. Residue Arg-271 participates in xyloglucan binding.

The protein belongs to the glycosyl hydrolase 16 family. XTH group 2 subfamily. In terms of processing, contains at least one intrachain disulfide bond essential for its enzymatic activity. In terms of tissue distribution, expressed in fruit pulp. Expressed in leaves, flowers, calyces, stems and fruits. Highest expression in leaves and lowest in fruits.

It is found in the secreted. Its subcellular location is the cell wall. The protein localises to the extracellular space. The protein resides in the apoplast. It carries out the reaction breaks a beta-(1-&gt;4) bond in the backbone of a xyloglucan and transfers the xyloglucanyl segment on to O-4 of the non-reducing terminal glucose residue of an acceptor, which can be a xyloglucan or an oligosaccharide of xyloglucan.. Functionally, catalyzes xyloglucan endotransglycosylation (XET). Cleaves and religates xyloglucan polymers. Does not catalyze xyloglucan endohydrolysis (XEH). Overexpression in Arabidopsis transgenic plants results in elevated tolerance to abiotic stress, such as salt, ABA (abscisic acid) and drought stresses, and in the production of wider leaves. Overexpression in transgenic tomato plants slows down fruit ripening and softening, and the plants produce larger fruits. Both transgenic plants have larger and more irregular cells. Moreover, the fruits of the transgenic tomato have higher density of cell wall and intercellular spaces. May provide cells with more strength and thickness to maintain structural integrity. Probably involved in cell wall assembly and synthesis in fast growing tissues and in the maintenance of firmness in mature fruits. The sequence is that of Xyloglucan endotransglucosylase protein 1 from Diospyros kaki (Kaki persimmon).